The sequence spans 470 residues: Metalloreductase STEAP4 (470 aa).

Residues 27 to 30 (TGDF), 49 to 50 (SR), Tyr67, 81 to 85 (MHREH), Asn106, and Ala139 each bind NADP(+). Residues Trp140 and Asp148 each coordinate FAD. Arg171 provides a ligand contact to NADP(+). A run of 2 helical transmembrane segments spans residues 202–224 (FPFY…REVI) and 236–256 (YRLA…ILLA). A Fe(3+)-binding site is contributed by Tyr217. The Ferric oxidoreductase domain occupies 247–395 (FPITALILLA…LGYLTLVLCT (149 aa)). FAD is bound by residues Gln269 and Arg290. The next 2 membrane-spanning stretches (helical) occupy residues 293 to 313 (LGLV…VIPI) and 342 to 362 (AWIN…FLLL). His304 contributes to the heme b binding site. Tyr307 provides a ligand contact to Fe(3+). FAD contacts are provided by Ser366 and Gln383. 2 helical membrane passes run 381–401 (FVQS…TLVY) and 419–439 (AYIL…ILIM). His397 provides a ligand contact to heme b.

Belongs to the STEAP family. As to quaternary structure, homotrimer. Interacts with PTK2/FAK1; the interaction may regulate PTK2 phosphorylation. The cofactor is FAD. Heme b is required as a cofactor. In terms of tissue distribution, expressed in white and brown adipose tissues cells, as well as in muscle and liver cells. Detected in joints and spleens of arthritic mice.

The protein localises to the cell membrane. It localises to the golgi apparatus membrane. It is found in the early endosome membrane. The catalysed reaction is 2 Fe(2+) + NADP(+) + H(+) = 2 Fe(3+) + NADPH. The enzyme catalyses 2 Cu(+) + NADP(+) + H(+) = 2 Cu(2+) + NADPH. Its function is as follows. Integral membrane protein that functions as a NADPH-dependent ferric-chelate reductase, using NADPH from one side of the membrane to reduce a Fe(3+) chelate that is bound on the other side of the membrane. Mediates sequential transmembrane electron transfer from NADPH to FAD and onto heme, and finally to the Fe(3+) chelate. Can also reduce Cu(2+) to Cu(1+). Plays a role in systemic metabolic homeostasis, integrating inflammatory and metabolic responses. Associated with obesity and insulin-resistance. Involved in inflammatory arthritis, through the regulation of inflammatory cytokines. Inhibits anchorage-independent cell proliferation. This Mus musculus (Mouse) protein is Metalloreductase STEAP4 (Steap4).